The primary structure comprises 515 residues: Leucine-rich repeat transmembrane neuronal protein 2 (515 aa).

The signal sequence occupies residues 1–33 (MGLHFKWPLGAPMLAAIYAMSVVLKMLPALGMA). In terms of domain architecture, LRRNT spans 34–61 (CPPKCRCEKLLFYCDSQGFHSVPNATDK). Over 34-421 (CPPKCRCEKL…EPDNAIFTQR (388 aa)) the chain is Extracellular. N57 carries N-linked (GlcNAc...) asparagine glycosylation. LRR repeat units lie at residues 63-83 (SLGL…QFAS), 86-107 (QLTW…AFQG), 110-131 (KLKE…TFTQ), 134-155 (NLQN…LFYG), 158-179 (KLQT…LFWD), 182-203 (SLEF…GFAG), 206-227 (KLRE…HFLR), 230-251 (SLHT…MDWT), 254-275 (TLEK…VFET), and 278-299 (NLKI…ILNS). An N-linked (GlcNAc...) asparagine glycan is attached at N126. A glycan (N-linked (GlcNAc...) asparagine) is linked at N243. Residues 311–362 (NLWECSPRVCALASWLGSFQGRWEHSILCHSPDHTQGEDILDAVHGFQLCWN) form the LRRCT domain. N-linked (GlcNAc...) asparagine glycosylation occurs at N362. The chain crosses the membrane as a helical span at residues 422 to 442 (VITGTMALLFSFFFIIFIVFI). The Cytoplasmic portion of the chain corresponds to 443–515 (SRKCCPPTLR…QQLPYKECEV (73 aa)). Residues 512–515 (ECEV) carry the Involved in DLG4-binding motif.

The protein belongs to the LRRTM family. As to quaternary structure, interacts with DLG4. Interacts with neurexin NRXN1; interaction is mediated by heparan sulfate glycan modification on neurexin. As to expression, expressed in neuronal tissues.

Its subcellular location is the cell membrane. The protein localises to the postsynaptic cell membrane. Functionally, involved in the development and maintenance of excitatory synapses in the vertebrate nervous system. Regulates surface expression of AMPA receptors and instructs the development of functional glutamate release sites. Acts as a ligand for the presynaptic receptors NRXN1-A and NRXN1-B. This is Leucine-rich repeat transmembrane neuronal protein 2 (Lrrtm2) from Mus musculus (Mouse).